Reading from the N-terminus, the 139-residue chain is MIILVMSMRDVEKIIKGIIKDMNPRFKRKTLRELLSEEKPHVIINGKRHRIKRRELEFLKEIASEDLKIPIVLEVDSSLGGAIKISGKEEVKVISKILGKEIDIFSEKDVMYIYKPELKIVRKELPTTTQLIFKLSLFD.

Belongs to the UPF0216 family.

The chain is UPF0216 protein MJ1224 from Methanocaldococcus jannaschii (strain ATCC 43067 / DSM 2661 / JAL-1 / JCM 10045 / NBRC 100440) (Methanococcus jannaschii).